The chain runs to 95 residues: Small ribosomal subunit protein bS18 (95 aa).

It belongs to the bacterial ribosomal protein bS18 family. Part of the 30S ribosomal subunit. Forms a tight heterodimer with protein bS6.

In terms of biological role, binds as a heterodimer with protein bS6 to the central domain of the 16S rRNA, where it helps stabilize the platform of the 30S subunit. This is Small ribosomal subunit protein bS18 from Rickettsia africae (strain ESF-5).